We begin with the raw amino-acid sequence, 238 residues long: Deoxyribose-phosphate aldolase (238 aa).

Residue aspartate 102 is the Proton donor/acceptor of the active site. Lysine 164 functions as the Schiff-base intermediate with acetaldehyde in the catalytic mechanism. The active-site Proton donor/acceptor is lysine 193.

The protein belongs to the DeoC/FbaB aldolase family. DeoC type 1 subfamily.

The protein localises to the cytoplasm. The catalysed reaction is 2-deoxy-D-ribose 5-phosphate = D-glyceraldehyde 3-phosphate + acetaldehyde. The protein operates within carbohydrate degradation; 2-deoxy-D-ribose 1-phosphate degradation; D-glyceraldehyde 3-phosphate and acetaldehyde from 2-deoxy-alpha-D-ribose 1-phosphate: step 2/2. In terms of biological role, catalyzes a reversible aldol reaction between acetaldehyde and D-glyceraldehyde 3-phosphate to generate 2-deoxy-D-ribose 5-phosphate. In Rhodospirillum rubrum (strain ATCC 11170 / ATH 1.1.1 / DSM 467 / LMG 4362 / NCIMB 8255 / S1), this protein is Deoxyribose-phosphate aldolase.